The sequence spans 303 residues: Probable endonuclease 4 (303 aa).

Zn(2+) is bound by residues H78, H118, E154, D188, H191, H222, D235, H237, and E267.

It belongs to the AP endonuclease 2 family. Zn(2+) is required as a cofactor.

It catalyses the reaction Endonucleolytic cleavage to 5'-phosphooligonucleotide end-products.. Its function is as follows. Endonuclease IV plays a role in DNA repair. It cleaves phosphodiester bonds at apurinic or apyrimidinic (AP) sites, generating a 3'-hydroxyl group and a 5'-terminal sugar phosphate. The polypeptide is Probable endonuclease 4 (Mycoplasmoides gallisepticum (strain R(low / passage 15 / clone 2)) (Mycoplasma gallisepticum)).